We begin with the raw amino-acid sequence, 3106 residues long: Cilia- and flagella-associated protein 54 (3106 aa).

3 stretches are compositionally biased toward low complexity: residues 1–24, 34–48, and 2356–2368; these read MASS…VSPV, STAV…KSSS, and ESCS…TSTT. Disordered regions lie at residues 1 to 58 and 2354 to 2374; these read MASS…THSE and PEES…KDDS.

Belongs to the CFAP54 family. In terms of tissue distribution, expressed at high level in the testis and at a low level in the lung and brain.

Its subcellular location is the cytoplasm. The protein localises to the cytoskeleton. It localises to the cilium axoneme. Its function is as follows. Required for assembly and function of cilia and flagella. The protein is Cilia- and flagella-associated protein 54 of Mus musculus (Mouse).